The following is a 96-amino-acid chain: Small ribosomal subunit protein bS6 (96 aa).

This sequence belongs to the bacterial ribosomal protein bS6 family.

In terms of biological role, binds together with bS18 to 16S ribosomal RNA. This Carboxydothermus hydrogenoformans (strain ATCC BAA-161 / DSM 6008 / Z-2901) protein is Small ribosomal subunit protein bS6.